The primary structure comprises 554 residues: Oxygen-dependent choline dehydrogenase (554 aa).

4-33 (DYIIIGAGSAGNVLATRLTEDPNTTVLLLE) provides a ligand contact to FAD. His-473 (proton acceptor) is an active-site residue.

This sequence belongs to the GMC oxidoreductase family. It depends on FAD as a cofactor.

It catalyses the reaction choline + A = betaine aldehyde + AH2. It carries out the reaction betaine aldehyde + NAD(+) + H2O = glycine betaine + NADH + 2 H(+). It participates in amine and polyamine biosynthesis; betaine biosynthesis via choline pathway; betaine aldehyde from choline (cytochrome c reductase route): step 1/1. Involved in the biosynthesis of the osmoprotectant glycine betaine. Catalyzes the oxidation of choline to betaine aldehyde and betaine aldehyde to glycine betaine at the same rate. The protein is Oxygen-dependent choline dehydrogenase of Klebsiella pneumoniae subsp. pneumoniae (strain ATCC 700721 / MGH 78578).